Consider the following 408-residue polypeptide: Flavohemoprotein (408 aa).

Positions 1 to 138 (MLSEKTIRIV…LADIFIGREG (138 aa)) constitute a Globin domain. H85 serves as a coordination point for heme b. Catalysis depends on charge relay system residues Y95 and E137. The interval 149-408 (GGWNGTRTFV…FGPKEELVAV (260 aa)) is reductase. The 112-residue stretch at 152–263 (NGTRTFVVTK…GPPCGEFTVD (112 aa)) folds into the FAD-binding FR-type domain. FAD-binding positions include Y190 and 205-208 (RNYS). 277-282 (GIGVTP) contacts NADP(+). 398 to 401 (FFGP) contributes to the FAD binding site.

The protein belongs to the globin family. Two-domain flavohemoproteins subfamily. This sequence in the C-terminal section; belongs to the flavoprotein pyridine nucleotide cytochrome reductase family. It depends on heme b as a cofactor. FAD is required as a cofactor.

The catalysed reaction is 2 nitric oxide + NADPH + 2 O2 = 2 nitrate + NADP(+) + H(+). It carries out the reaction 2 nitric oxide + NADH + 2 O2 = 2 nitrate + NAD(+) + H(+). The chain is Flavohemoprotein from Rhodopirellula baltica (strain DSM 10527 / NCIMB 13988 / SH1).